We begin with the raw amino-acid sequence, 63 residues long: MKLTCVLIVAVLILTACQVIAADEATNRATKRGCLMCWGSNVRCCEKANACVSINYECPKARR.

The N-terminal stretch at 1–22 (MKLTCVLIVAVLILTACQVIAA) is a signal peptide. Cystine bridges form between Cys34–Cys45, Cys37–Cys51, and Cys44–Cys58.

This sequence belongs to the conotoxin O1 superfamily. Expressed by the venom duct.

It is found in the secreted. In terms of biological role, probable neurotoxin. This Californiconus californicus (California cone) protein is Conotoxin Cal6.28.